The sequence spans 325 residues: MKRSLSGIQPSGILHIGNYFGAMKQFVDLQDSYDGFYFIADYHSLTSLTKAETLKENTYNIVLDYLAVGLDPSKSTIFLQSNVPEHTELTWLLSNITPVGLLERGHSYKDKIAKGIPSNTGLLTYPVLMAADILIYDSDVVPVGKDQKQHLEMTRDIAMKFNQQYGVEFFKLPEPLILDDSAIVPGTDGQKMSKSYNNTINMFATKKKLKEQVMSIVTDSTPLEEPKNPDNNIAKIYALFNNIDKQNELKDKFLAGNFGYGHAKTELLNSILEYFGTAREKREELEKNMDYVKDVLNEGSKKARTIAIEKIKKAKEIVGLVGNIY.

ATP-binding positions include Q9–S11 and G17–N18. The short motif at P10–N18 is the 'HIGH' region element. An L-tryptophan-binding site is contributed by D132. Residues G144–D146, V184, and K191–S195 each bind ATP. Residues K191 to S195 carry the 'KMSKS' region motif.

Belongs to the class-I aminoacyl-tRNA synthetase family. Homodimer.

The protein localises to the cytoplasm. It catalyses the reaction tRNA(Trp) + L-tryptophan + ATP = L-tryptophyl-tRNA(Trp) + AMP + diphosphate + H(+). In terms of biological role, catalyzes the attachment of tryptophan to tRNA(Trp). The sequence is that of Tryptophan--tRNA ligase from Fusobacterium nucleatum subsp. nucleatum (strain ATCC 25586 / DSM 15643 / BCRC 10681 / CIP 101130 / JCM 8532 / KCTC 2640 / LMG 13131 / VPI 4355).